The sequence spans 321 residues: PI-PLC X domain-containing protein 3 (321 aa).

The region spanning 22-197 (SIHSIPLTNL…DYQVLVFYHS (176 aa)) is the PI-PLC X-box domain. Active-site residues include His-37 and His-114.

This is PI-PLC X domain-containing protein 3 (PLCXD3) from Bos taurus (Bovine).